Consider the following 1170-residue polypeptide: Type I restriction enzyme EcoKI endonuclease subunit (1170 aa).

The stretch at 143–229 (YHQEVLTLKQ…QERKAYHKEI (87 aa)) forms a coiled coil. A DNA-binding region (H-T-H motif) is located at residues 431 to 450 (NQWFADNPGMSELGLRYYQE). Positions 458–639 (KAIVKGQQEI…GEPVYRYTYR (182 aa)) constitute a Helicase ATP-binding domain. 472–478 (ATGTGKT) is a binding site for ATP. Positions 574 to 577 (DEAH) match the DEAH box motif. One can recognise a Helicase C-terminal domain in the interval 714–879 (ELTNYLDPTG…TLVNEITDSE (166 aa)).

The protein belongs to the HsdR family. The type I restriction/modification system is composed of three polypeptides R, M and S. The restriction enzyme has stoichiometry R(2)M(2)S(1). The methyltransferase is composed of M(2)S(1). As to quaternary structure, (Microbial infection) Interacts with Escherichia phage T7 protein Ocr; this interaction leads to the inhibition of the type I bifunctional endonuclease and methyltransferase restriction enzyme R.EcoKI composed of R(2)M(2)S(1). Upon purification after overexpression about one-third has the initiating methionine removed.

The enzyme catalyses Endonucleolytic cleavage of DNA to give random double-stranded fragments with terminal 5'-phosphates, ATP is simultaneously hydrolyzed.. The subtype A restriction (R) subunit of a type I restriction enzyme that recognizes 5'-AACN(6)GTGC-3' and cleaves a random distance away. The R subunit is required for both endonuclease and ATPase activities but not for modification. Has endonucleolytic activity that requires Mg(2+), ATP and S-adenosyl-L-methionine (SAM); ATP can be replaced by dATP, no tested molecule could substitute for SAM. Generates double-stranded DNA with no nicks, by cutting one strand then the other within a few seconds. Cleaves only non-methylated DNA, hemi-methylated and fully methylated DNA are not substrates. After locating a non-methylated recognition site, the enzyme complex serves as a molecular motor that translocates DNA in an ATP-dependent manner until a collision occurs that triggers cleavage. This is Type I restriction enzyme EcoKI endonuclease subunit from Escherichia coli (strain K12).